A 377-amino-acid polypeptide reads, in one-letter code: DNA replication and repair protein RecF (377 aa).

Residue 30–37 participates in ATP binding; sequence GQNAQGKS.

It belongs to the RecF family.

The protein resides in the cytoplasm. The RecF protein is involved in DNA metabolism; it is required for DNA replication and normal SOS inducibility. RecF binds preferentially to single-stranded, linear DNA. It also seems to bind ATP. The chain is DNA replication and repair protein RecF from Cyanothece sp. (strain PCC 7425 / ATCC 29141).